A 200-amino-acid polypeptide reads, in one-letter code: Recombination protein RecR (200 aa).

Residues 57–72 (CRQCRTLTEQELCPQC) form a C4-type zinc finger. The Toprim domain occupies 80–175 (TQLCVVEGPM…VASRIAHGVP (96 aa)).

It belongs to the RecR family.

Its function is as follows. May play a role in DNA repair. It seems to be involved in an RecBC-independent recombinational process of DNA repair. It may act with RecF and RecO. This chain is Recombination protein RecR, found in Pseudomonas putida (strain W619).